Consider the following 325-residue polypeptide: Delta(1)-pyrroline-2-carboxylate reductase (325 aa).

Belongs to the ornithine cyclodeaminase/mu-crystallin family.

The enzyme catalyses L-proline + NAD(+) = 1-pyrroline-2-carboxylate + NADH + H(+). The catalysed reaction is L-proline + NADP(+) = 1-pyrroline-2-carboxylate + NADPH + H(+). Functionally, catalyzes the reduction of Delta(1)-pyrroline-2-carboxylate (Pyr2C) to L-proline, using preferentially NADPH over NADH as the electron donor. Is likely involved in a degradation pathway that converts trans-3-hydroxy-L-proline (t3LHyp) to L-proline, which allows B.cereus to grow on t3LHyp as a sole carbon source. This is Delta(1)-pyrroline-2-carboxylate reductase from Bacillus cereus (strain ATCC 14579 / DSM 31 / CCUG 7414 / JCM 2152 / NBRC 15305 / NCIMB 9373 / NCTC 2599 / NRRL B-3711).